The following is a 402-amino-acid chain: Beta sliding clamp (402 aa).

Belongs to the beta sliding clamp family. Forms a ring-shaped head-to-tail homodimer around DNA which binds and tethers DNA polymerases and other proteins to the DNA. The DNA replisome complex has a single clamp-loading complex (3 tau and 1 each of delta, delta', psi and chi subunits) which binds 3 Pol III cores (1 core on the leading strand and 2 on the lagging strand) each with a beta sliding clamp dimer. Additional proteins in the replisome are other copies of gamma, psi and chi, Ssb, DNA helicase and RNA primase.

The protein resides in the cytoplasm. In terms of biological role, confers DNA tethering and processivity to DNA polymerases and other proteins. Acts as a clamp, forming a ring around DNA (a reaction catalyzed by the clamp-loading complex) which diffuses in an ATP-independent manner freely and bidirectionally along dsDNA. Initially characterized for its ability to contact the catalytic subunit of DNA polymerase III (Pol III), a complex, multichain enzyme responsible for most of the replicative synthesis in bacteria; Pol III exhibits 3'-5' exonuclease proofreading activity. The beta chain is required for initiation of replication as well as for processivity of DNA replication. The polypeptide is Beta sliding clamp (dnaN) (Mycobacterium tuberculosis (strain CDC 1551 / Oshkosh)).